Reading from the N-terminus, the 210-residue chain is Probable GTP-binding protein EngB (210 aa).

Positions 27–201 constitute an EngB-type G domain; that stretch reads MGIEVAFAGR…HQKLDIWFSQ (175 aa). Residues 35-42, 62-66, 80-83, 147-150, and 180-182 each bind GTP; these read GRSNAGKS, GRTQL, DLPG, TKAD, and FSV. Positions 42 and 64 each coordinate Mg(2+).

This sequence belongs to the TRAFAC class TrmE-Era-EngA-EngB-Septin-like GTPase superfamily. EngB GTPase family. Requires Mg(2+) as cofactor.

Functionally, necessary for normal cell division and for the maintenance of normal septation. The chain is Probable GTP-binding protein EngB from Photorhabdus laumondii subsp. laumondii (strain DSM 15139 / CIP 105565 / TT01) (Photorhabdus luminescens subsp. laumondii).